The sequence spans 385 residues: 1-deoxy-D-xylulose 5-phosphate reductoisomerase (385 aa).

Residues T10, G11, S12, I13, K37, and N124 each contribute to the NADPH site. 1-deoxy-D-xylulose 5-phosphate is bound at residue K125. An NADPH-binding site is contributed by E126. Mn(2+) is bound at residue D150. Positions 151, 152, 176, and 199 each coordinate 1-deoxy-D-xylulose 5-phosphate. Position 152 (E152) interacts with Mn(2+). G205 serves as a coordination point for NADPH. S212, N217, K218, and E221 together coordinate 1-deoxy-D-xylulose 5-phosphate. Residue E221 coordinates Mn(2+).

Belongs to the DXR family. Mg(2+) is required as a cofactor. Requires Mn(2+) as cofactor.

The enzyme catalyses 2-C-methyl-D-erythritol 4-phosphate + NADP(+) = 1-deoxy-D-xylulose 5-phosphate + NADPH + H(+). Its pathway is isoprenoid biosynthesis; isopentenyl diphosphate biosynthesis via DXP pathway; isopentenyl diphosphate from 1-deoxy-D-xylulose 5-phosphate: step 1/6. Catalyzes the NADPH-dependent rearrangement and reduction of 1-deoxy-D-xylulose-5-phosphate (DXP) to 2-C-methyl-D-erythritol 4-phosphate (MEP). This is 1-deoxy-D-xylulose 5-phosphate reductoisomerase from Clostridium botulinum (strain Loch Maree / Type A3).